The following is a 214-amino-acid chain: uncharacterized protein (214 aa).

The first 17 residues, methionine 1–glycine 17, serve as a signal peptide directing secretion. N-linked (GlcNAc...) asparagine glycosylation is found at asparagine 88 and asparagine 139.

As to expression, component of the acid-insoluble organic matrix of calcified layers of the shell (at protein level).

It is found in the secreted. This is an uncharacterized protein from Lottia gigantea (Giant owl limpet).